The chain runs to 61 residues: uncharacterized protein (61 aa).

This is an uncharacterized protein from Escherichia coli (Bacteriophage T4).